A 108-amino-acid polypeptide reads, in one-letter code: Monothiol bacilliredoxin BrxC (108 aa).

Cys-31 carries the post-translational modification S-bacillithiol cysteine disulfide.

In terms of assembly, interacts with AbrB, BdhA, Bdr, BrxB, FolD, GapA, GapB, GatA, PfkA, PyrAA, PyrAB, PyrE, PyrG, PyrH, RpsB, RpsK, RpsL, SalA, SucC, Tuf and YtsJ. In terms of processing, cys can react with bacillithiol (BSH) to form mixed disulfides. S-bacillithiolation protects Cys residues against overoxidation by acting as a redox switch in response to oxidative stress.

Functionally, S-bacillithiolation is the formation of mixed disulfide bonds between protein thiols and the general thiol reductant bacillithiol (BSH) under oxidative stress. BSH is an equivalent of glutathione (GSH) in Firmicutes. This protein is a monothiol bacilliredoxin, which debacillithiolates (removes BSH) the S-bacillithiolated glyceraldehyde-3-phosphate dehydrogenases (GAPDHs) GapA and GapB in vivo and probably a number of other oxidized cytosolic proteins. Debacillithiolates the S-bacillithiolated Bdr (Bdr-SSB) and BrxB (BrxB-SSB) in vitro. Involved in maintaining redox homeostasis in response to disulfide stress conditions. The sequence is that of Monothiol bacilliredoxin BrxC from Bacillus subtilis (strain 168).